Here is a 431-residue protein sequence, read N- to C-terminus: 3-phosphoshikimate 1-carboxyvinyltransferase (431 aa).

Residues Lys-21, Ser-22, and Arg-26 each coordinate 3-phosphoshikimate. Residue Lys-21 participates in phosphoenolpyruvate binding. Residues Gly-93 and Arg-122 each coordinate phosphoenolpyruvate. 3-phosphoshikimate-binding residues include Ser-167, Gln-169, Asp-318, and Lys-345. Gln-169 is a binding site for phosphoenolpyruvate. The active-site Proton acceptor is the Asp-318. Residues Arg-349 and Arg-391 each coordinate phosphoenolpyruvate.

The protein belongs to the EPSP synthase family. In terms of assembly, monomer.

The protein localises to the cytoplasm. It carries out the reaction 3-phosphoshikimate + phosphoenolpyruvate = 5-O-(1-carboxyvinyl)-3-phosphoshikimate + phosphate. It functions in the pathway metabolic intermediate biosynthesis; chorismate biosynthesis; chorismate from D-erythrose 4-phosphate and phosphoenolpyruvate: step 6/7. Catalyzes the transfer of the enolpyruvyl moiety of phosphoenolpyruvate (PEP) to the 5-hydroxyl of shikimate-3-phosphate (S3P) to produce enolpyruvyl shikimate-3-phosphate and inorganic phosphate. In Roseiflexus castenholzii (strain DSM 13941 / HLO8), this protein is 3-phosphoshikimate 1-carboxyvinyltransferase.